Here is an 84-residue protein sequence, read N- to C-terminus: Small ribosomal subunit protein eS27 (84 aa).

Over residues 1-16 (MPLAKDLLHPTPEEEK) the composition is skewed to basic and acidic residues. The segment at 1–23 (MPLAKDLLHPTPEEEKRKHKKKR) is disordered. A C4-type zinc finger spans residues 37–59 (CPGCYKITTVFSHAQTVVLCVGC).

The protein belongs to the eukaryotic ribosomal protein eS27 family. Component of the small ribosomal subunit. Part of the small subunit (SSU) processome, composed of more than 70 proteins and the RNA chaperone small nucleolar RNA (snoRNA) U3. Zn(2+) is required as a cofactor.

Its subcellular location is the cytoplasm. It is found in the nucleus. The protein localises to the nucleolus. Its function is as follows. Component of the small ribosomal subunit. The ribosome is a large ribonucleoprotein complex responsible for the synthesis of proteins in the cell. Required for proper rRNA processing and maturation of 18S rRNAs. Part of the small subunit (SSU) processome, first precursor of the small eukaryotic ribosomal subunit. During the assembly of the SSU processome in the nucleolus, many ribosome biogenesis factors, an RNA chaperone and ribosomal proteins associate with the nascent pre-rRNA and work in concert to generate RNA folding, modifications, rearrangements and cleavage as well as targeted degradation of pre-ribosomal RNA by the RNA exosome. The chain is Small ribosomal subunit protein eS27 (rps27) from Xenopus laevis (African clawed frog).